The chain runs to 294 residues: Large ribosomal subunit protein uL4m (294 aa).

Positions 120-139 are disordered; the sequence is VRGGGRKPWQQKGSGRARHG. R147 carries the omega-N-methylarginine modification.

It belongs to the universal ribosomal protein uL4 family. In terms of assembly, component of the mitochondrial ribosome large subunit (39S) which comprises a 16S rRNA and about 50 distinct proteins. Interacts with MIEF1 upstream open reading frame protein.

The protein localises to the mitochondrion. This is Large ribosomal subunit protein uL4m (MRPL4) from Bos taurus (Bovine).